Reading from the N-terminus, the 51-residue chain is Small ribosomal subunit protein eS31 (51 aa).

Residues Cys21, Cys24, Cys39, and Cys42 each coordinate Zn(2+). A C4-type zinc finger spans residues 21–42 (CVRCSNGVFMADHGDRYACGKC).

Belongs to the eukaryotic ribosomal protein eS31 family. In terms of assembly, part of the 30S ribosomal subunit. The cofactor is Zn(2+).

The protein is Small ribosomal subunit protein eS31 of Methanothermobacter thermautotrophicus (strain ATCC 29096 / DSM 1053 / JCM 10044 / NBRC 100330 / Delta H) (Methanobacterium thermoautotrophicum).